A 457-amino-acid polypeptide reads, in one-letter code: ATP-dependent protease ATPase subunit HslU (457 aa).

Residues I18 and 60–65 (GVGKTE) each bind ATP. Residues 142-171 (KQPGMGFFNPAAPEEQEEQPSADQSSTREK) form a disordered region. Residues D269, E335, and R407 each contribute to the ATP site.

Belongs to the ClpX chaperone family. HslU subfamily. As to quaternary structure, a double ring-shaped homohexamer of HslV is capped on each side by a ring-shaped HslU homohexamer. The assembly of the HslU/HslV complex is dependent on binding of ATP.

It localises to the cytoplasm. In terms of biological role, ATPase subunit of a proteasome-like degradation complex; this subunit has chaperone activity. The binding of ATP and its subsequent hydrolysis by HslU are essential for unfolding of protein substrates subsequently hydrolyzed by HslV. HslU recognizes the N-terminal part of its protein substrates and unfolds these before they are guided to HslV for hydrolysis. The chain is ATP-dependent protease ATPase subunit HslU from Maridesulfovibrio salexigens (strain ATCC 14822 / DSM 2638 / NCIMB 8403 / VKM B-1763) (Desulfovibrio salexigens).